Here is a 1164-residue protein sequence, read N- to C-terminus: Phospholipid-transporting ATPase IA (1164 aa).

The Cytoplasmic portion of the chain corresponds to 1–75 (MPTMRRTVSE…PRFLYSQFRR (75 aa)). The residue at position 25 (serine 25) is a Phosphoserine. Residue threonine 28 is modified to Phosphothreonine. Position 29 is a phosphoserine (serine 29). A helical transmembrane segment spans residues 76-96 (AANSFFLFIALLQQIPDVSPT). Topologically, residues 97–100 (GRYT) are exoplasmic loop. The chain crosses the membrane as a helical span at residues 101-121 (TLVPLLFILAVAAIKEIIEDI). The Cytoplasmic segment spans residues 122 to 297 (KRHKADNAVN…SNVERITNVQ (176 aa)). Residues 298–318 (ILILFCILIAMSLVCSVGSAI) form a helical membrane-spanning segment. Over 319–339 (WNRRHSGKDWYLHLHYGGASN) the chain is Exoplasmic loop. The chain crosses the membrane as a helical span at residues 340 to 360 (FGLNFLTFIILFNNLIPISLL). At 361–866 (VTLEVVKFTQ…KCILYCFYKN (506 aa)) the chain is on the cytoplasmic side. Aspartate 409 serves as the catalytic 4-aspartylphosphate intermediate. Residues aspartate 409, lysine 410, and threonine 411 each contribute to the ATP site. Aspartate 409 contacts Mg(2+). Residue threonine 411 participates in Mg(2+) binding. Residue serine 443 is modified to Phosphoserine. ATP is bound by residues glutamate 508, phenylalanine 549, lysine 572, arginine 605, threonine 685, glycine 686, aspartate 687, 741 to 748 (ALIIDGKT), arginine 775, and lysine 781. Position 801 (aspartate 801) interacts with Mg(2+). Residues asparagine 804 and aspartate 805 each contribute to the ATP site. Aspartate 805 serves as a coordination point for Mg(2+). The helical transmembrane segment at 867–887 (IVLYIIEIWFAFVNGFSGQIL) threads the bilayer. Residues 888-890 (FER) are Exoplasmic loop-facing. The helical transmembrane segment at 891–911 (WCIGLYNVMFTAMPPLTLGIF) threads the bilayer. Over 912–939 (ERSCRKENMLKYPELYKTSQNALDFNTK) the chain is Cytoplasmic. The chain crosses the membrane as a helical span at residues 940-960 (VFWVHCLNGLFHSVILFWFPL). The Exoplasmic loop segment spans residues 961–977 (KALQYGTVFGNGKTSDY). A helical transmembrane segment spans residues 978-998 (LLLGNFVYTFVVITVCLKAGL). Topologically, residues 999-1008 (ETSYWTWFSH) are cytoplasmic. The helical transmembrane segment at 1009 to 1029 (IAIWGSIALWVVFFGIYSSLW) threads the bilayer. The Exoplasmic loop segment spans residues 1030–1044 (PAVPMAPDMSGEAAM). A helical membrane pass occupies residues 1045 to 1065 (LFSSGVFWVGLLSIPVASLLL). At 1066–1164 (DVLYKVIKRT…DTTKQRPDEW (99 aa)) the chain is on the cytoplasmic side. 1095–1102 (GAVVLGKS) is an ATP binding site. A Phosphoserine modification is found at serine 1126.

This sequence belongs to the cation transport ATPase (P-type) (TC 3.A.3) family. Type IV subfamily. As to quaternary structure, component of a P4-ATPase flippase complex which consists of a catalytic alpha subunit and an accessory beta subunit. Interacts with TMEM30A to form a flippase complex; this complex forms an intermediate phosphoenzyme. Interacts with TMEM30B; this interaction is reported conflictingly. Requires Mg(2+) as cofactor. Cleaved by calpain in a caspase- and calcium influx-dependent manner only during platelet apoptosis and may lead to inactivation. As to expression, found in most tissues except liver and testis. Most abundant in brain and lung. Also detected in fetal tissues. Isoform 1 is expressed in brain. Isoform 2 and isoform 3 are expressed in reticulocytes. Expressed in mouse hippocampus in both dentate gyrus (DG) and the CA3 regions. Expressed in both neuronal as well as non-neuronal cells within the DG. Highly expressed in platelets.

It is found in the cytoplasmic vesicle. The protein localises to the secretory vesicle. Its subcellular location is the chromaffin granule membrane. It localises to the cytoplasmic granule. The protein resides in the cell membrane. It is found in the endoplasmic reticulum. The protein localises to the golgi apparatus. Its subcellular location is the endomembrane system. The enzyme catalyses ATP + H2O + phospholipidSide 1 = ADP + phosphate + phospholipidSide 2.. The catalysed reaction is a 1,2-diacyl-sn-glycero-3-phospho-L-serine(out) + ATP + H2O = a 1,2-diacyl-sn-glycero-3-phospho-L-serine(in) + ADP + phosphate + H(+). ATPase activity is stimulated by phosphatidylserine (PS) and minimally by phosphatidylethanolamine (PE). ATPase activity is inhibited by the vanadate and by the presence of calcium. Its function is as follows. Catalytic component of a P4-ATPase flippase complex which catalyzes the hydrolysis of ATP coupled to the transport of aminophospholipids from the outer to the inner leaflet of various membranes and ensures the maintenance of asymmetric distribution of phospholipids. Phospholipid translocation also seems to be implicated in vesicle formation and in uptake of lipid signaling molecules. In vitro, its ATPase activity is selectively and stereospecifically stimulated by phosphatidylserine (PS). The flippase complex ATP8A1:TMEM30A seems to play a role in regulation of cell migration probably involving flippase-mediated translocation of phosphatidylethanolamine (PE) at the cell membrane. Acts as aminophospholipid translocase at the cell membrane in neuronal cells; the activity is associated with hippocampus-dependent learning. May play a role in brain connectivity. In Mus musculus (Mouse), this protein is Phospholipid-transporting ATPase IA.